Consider the following 291-residue polypeptide: ATP synthase gamma chain (291 aa).

Belongs to the ATPase gamma chain family. As to quaternary structure, F-type ATPases have 2 components, CF(1) - the catalytic core - and CF(0) - the membrane proton channel. CF(1) has five subunits: alpha(3), beta(3), gamma(1), delta(1), epsilon(1). CF(0) has three main subunits: a, b and c.

The protein resides in the cell inner membrane. Produces ATP from ADP in the presence of a proton gradient across the membrane. The gamma chain is believed to be important in regulating ATPase activity and the flow of protons through the CF(0) complex. In Cupriavidus pinatubonensis (strain JMP 134 / LMG 1197) (Cupriavidus necator (strain JMP 134)), this protein is ATP synthase gamma chain.